Reading from the N-terminus, the 174-residue chain is Co-chaperone protein HscB (174 aa).

The J domain maps to 2 to 74 (DYFTLFGLPA…LKRAEYMLSL (73 aa)).

Belongs to the HscB family. In terms of assembly, interacts with HscA and stimulates its ATPase activity. Interacts with IscU.

Functionally, co-chaperone involved in the maturation of iron-sulfur cluster-containing proteins. Seems to help targeting proteins to be folded toward HscA. In Yersinia pestis bv. Antiqua (strain Antiqua), this protein is Co-chaperone protein HscB.